The following is a 54-amino-acid chain: Hydrophobic protein RCI2B (54 aa).

The next 2 helical transmembrane spans lie at 2–22 (STATFVEIILAIILPPLGVFL) and 32–52 (ICLILTLFGYLPGILYALYII).

This sequence belongs to the UPF0057 (PMP3) family.

Its subcellular location is the membrane. The protein is Hydrophobic protein RCI2B (RCI2B) of Arabidopsis thaliana (Mouse-ear cress).